We begin with the raw amino-acid sequence, 366 residues long: MNLLEKVEQDTMPARYKHMTSQEMIARVTEIKAQLGEDLFIPCHHYQKDEVVPFADAIGDSLQLAQIAANNKKAKHIVFCGVHFMAETADMLTTNEQIVTLPDMRAGCSMADMADIHQLTNAWPKLQHLFGDTILPVTYINSTAAIKSFVGEHGGTTVTSSNATKIVSWALQQKERIFFLPDQHLGRNTAFELGIPLEHMAIWNPIKNELEYDGNLDDCKVILWKGYCSVHQHFTVKNIENIRKNHPNMRIIVHPECTHEVVSLADDSGSTKKIVTEISNAAPGTEWAVGTEANLVGRIIQENPDKKIVSLNPFMCPCMTMNRIDLPHLLWTLEAIQNGEQRNQIKVDEHTTKFALKALERMLQLS.

2 residues coordinate iminosuccinate: histidine 44 and serine 61. Cysteine 108 serves as a coordination point for [4Fe-4S] cluster. Residues 139–141 (YIN) and serine 160 contribute to the iminosuccinate site. Cysteine 228 contributes to the [4Fe-4S] cluster binding site. Iminosuccinate-binding positions include 254-256 (HPE) and threonine 271. Cysteine 318 provides a ligand contact to [4Fe-4S] cluster.

It belongs to the quinolinate synthase family. Type 3 subfamily. [4Fe-4S] cluster is required as a cofactor.

It localises to the cytoplasm. The enzyme catalyses iminosuccinate + dihydroxyacetone phosphate = quinolinate + phosphate + 2 H2O + H(+). It functions in the pathway cofactor biosynthesis; NAD(+) biosynthesis; quinolinate from iminoaspartate: step 1/1. Its function is as follows. Catalyzes the condensation of iminoaspartate with dihydroxyacetone phosphate to form quinolinate. In Listeria innocua serovar 6a (strain ATCC BAA-680 / CLIP 11262), this protein is Quinolinate synthase.